The sequence spans 1023 residues: MCVYKTYKGKLKITSIPARADRPRLPFPLNFLIHKRKLYLIDTIAEVQRCADCGSYFKQTHTCSTRRRDFYFHHINTQSSDWWEEIKFFPLGAHPDTRRLFVVYDVETYTWHGSFGKQLMPFMLVFTLFGDAQLCEQAVNIAKKQKWSSWPKQANTFYYLNPQRNKVGSLFKQYRDALQEAASTLLWRQFLADNPCLENLCLKLGYVHASDIPFEELCTLELKGQPTFLEVYVVGHNINGFDEIVLAAQVINNKQGIPAAFKVSRNFMPRCGKILFNDLTFALPNPTHAARKDFKDWEEGTPTSADYKFQFVKFMVRDTFALTHTSLRNAAAAYALPVEKGCCPYKAVNEFYMLGTYRTDADSFPQRDYWSSDEEYLLNKSLWLQENSGAYDIVQRTLDYCAMDVLVTAELVKKLQASYLDFVHTSVGLPHCNFNVLQRPTISSNSHAIFRQVVYRSQRPNRSSLGNFLLAPSNEMYDYVRESIRGGRCYPTYIGVLTEAIYVYDICGMYASALTHPFPAGKPLNPFDRALAIKNWQDRLTQLHRPIDYFDRTLLPAIFTIDADPPPEAFLDVIPPFCSRKGGRLCWTNETLRGEVVTCLDAITLHNRGWRVQILNDPRTTVFPQWECLARDYVQLNIAAKERADKEKNQTLRSIAKLLSNALYGSFATKLDNRVTVFSDQMEDKYVRGISDGTYDIKSTAFVETDNLSSSVMAELKITYSPVKQQTDATRKHRQCTPTSNSSSDEDAPFYTLGDPQNHHVTYTYKPITFLEADDSALCLHTLQKKSSLIFNNRYPSHIASFVLAWTRAFVSEWADILYLEDRGTPLEDRILKFVYGDTDSMFLTQRGKELMDTRGKHRLKGNNRPLVFDPTNPQLTWLVECETQCPRCHGDAHSQESVFLAPKLYALKNIYCPSCRAESSGKLRAKGHATSQLSYDLLVTCYYSTEQLGDEKFGTSRLSLRRSLVSRQTHQQPFTVTETTLARTLRPWKDRTLRAIDRHRLAPYSNSHPNPRNKELCWMEMY.

The segment at 726–751 (QTDATRKHRQCTPTSNSSSDEDAPFY) is disordered.

This sequence belongs to the DNA polymerase type-B family. As to quaternary structure, heterodimer with the terminal protein; this heterodimer binds to bp 9 to 18 of the genome. Forms a complex with viral pTP, DBP and hosts NFIA and POU2F1/OCT1 for initiation of replication.

It is found in the host nucleus. It carries out the reaction DNA(n) + a 2'-deoxyribonucleoside 5'-triphosphate = DNA(n+1) + diphosphate. In terms of biological role, eukaryotic-type DNA polymerase involved in viral genomic replication. DNA synthesis is protein primed, and acts in a strand displacement replication. Assembles in complex with viral pTP, DBP, host NFIA and host POU2F1/OCT1 on viral origin of replication. The polymerase covalently transfers dCMP onto pTP, thereby initiating complementary strand synthesis. This chain is DNA polymerase, found in Bovine adenovirus B serotype 3 (BAdV-3).